The primary structure comprises 70 residues: Testis-expressed protein 53 (70 aa).

As to expression, expressed in Testis.

The chain is Testis-expressed protein 53 from Homo sapiens (Human).